A 588-amino-acid polypeptide reads, in one-letter code: Tetratricopeptide repeat protein 39B (588 aa).

TPR repeat units follow at residues 294–327 (SIILFYAARIDILKGRFEQAQETFQKCIVSQQEW), 485–518 (CLVQLLKGVCLKHLGRLLQAELCFNQVIQSEKRV), and 526–559 (PFTFYELGLLYKDQGDRDKAIRYIETAKSNYKDY).

The protein belongs to the TTC39 family.

Its function is as follows. May be involved in lipid metabolism. The chain is Tetratricopeptide repeat protein 39B (ttc39b) from Xenopus tropicalis (Western clawed frog).